Consider the following 585-residue polypeptide: Arginine--tRNA ligase (585 aa).

Positions 131-141 (ANPTGPMHVGH) match the 'HIGH' region motif.

This sequence belongs to the class-I aminoacyl-tRNA synthetase family. As to quaternary structure, monomer.

Its subcellular location is the cytoplasm. It carries out the reaction tRNA(Arg) + L-arginine + ATP = L-arginyl-tRNA(Arg) + AMP + diphosphate. In Rhizobium meliloti (strain 1021) (Ensifer meliloti), this protein is Arginine--tRNA ligase.